We begin with the raw amino-acid sequence, 501 residues long: Lysine--tRNA ligase (501 aa).

The Mg(2+) site is built by E411 and E418.

Belongs to the class-II aminoacyl-tRNA synthetase family. As to quaternary structure, homodimer. Mg(2+) is required as a cofactor.

The protein resides in the cytoplasm. It carries out the reaction tRNA(Lys) + L-lysine + ATP = L-lysyl-tRNA(Lys) + AMP + diphosphate. This chain is Lysine--tRNA ligase, found in Aliivibrio salmonicida (strain LFI1238) (Vibrio salmonicida (strain LFI1238)).